The following is a 373-amino-acid chain: Protein RETARDED ROOT GROWTH, mitochondrial (373 aa).

The transit peptide at 1–49 (MGKWRAVAALLLRNQLLNSSKRLNLSSSPCVSKHPTIGLASRFLNFRHF) directs the protein to the mitochondrion. The chain crosses the membrane as a helical span at residues 346 to 362 (EWCIIFLLAIENAIGIY).

Belongs to the RMD1/sif2 family. Predominantly expressed in the root meristem, in the primary and lateral root tips. Also present in leaves and pollen.

It is found in the mitochondrion membrane. Its subcellular location is the mitochondrion. Required for the maintenance of mitochondrial structure. Positive regulator of cell division and endoreduplication but negative regulator of cell expansion in the postembryonic root meristem, thus leading to the promotion of root growth. The polypeptide is Protein RETARDED ROOT GROWTH, mitochondrial (Arabidopsis thaliana (Mouse-ear cress)).